The primary structure comprises 997 residues: Signal peptide, CUB and EGF-like domain-containing protein 2 (997 aa).

Residues methionine 1–alanine 28 form the signal peptide. The region spanning aspartate 43–glutamate 83 is the EGF-like 1; calcium-binding domain. Disulfide bonds link cysteine 47/cysteine 60, cysteine 54/cysteine 69, cysteine 71/cysteine 82, cysteine 88/cysteine 100, cysteine 96/cysteine 109, cysteine 111/cysteine 124, cysteine 130/cysteine 141, and cysteine 137/cysteine 150. Positions aspartate 84–leucine 125 constitute an EGF-like 2; calcium-binding domain. One can recognise an EGF-like 3; calcium-binding domain in the interval aspartate 126 to glutamine 162. EGF-like domains follow at residues cysteine 175–cysteine 211, cysteine 215–cysteine 250, and cysteine 284–cysteine 319. One can recognise an EGF-like 7; calcium-binding domain in the interval aspartate 321–glutamine 361. Intrachain disulfides connect cysteine 325–cysteine 336, cysteine 332–cysteine 345, cysteine 347–cysteine 360, cysteine 366–cysteine 376, cysteine 372–cysteine 385, cysteine 387–cysteine 399, cysteine 405–cysteine 416, cysteine 412–cysteine 425, and cysteine 427–cysteine 440. The 39-residue stretch at aspartate 362–glycine 400 folds into the EGF-like 8; calcium-binding domain. One can recognise an EGF-like 9; calcium-binding domain in the interval aspartate 401–valine 441. N-linked (GlcNAc...) asparagine glycosylation occurs at asparagine 657. A disulfide bridge links cysteine 807 with cysteine 833. The region spanning cysteine 807–tyrosine 919 is the CUB domain. Residues isoleucine 845 to leucine 854 form an interaction with the cholesterol-anchor of SHH region. Cysteine 860 and cysteine 881 are oxidised to a cystine.

Interacts with SHH via the cholesterol anchor of the dually lipid-modified SHH (ShhNp). Interacts with PTCH1. Forms homooligomers and heterooligomers with SCUBE1 and SCUBE3. Interacts with VEGFR2. N-glycosylated. Expressed in adult heart, lung and testis.

It is found in the secreted. The protein resides in the cell surface. In terms of biological role, lipid-binding protein required for SHH long-range signaling by binding to the dually lipid-modified SHH (ShhNp) and by promoting ShhNp mobilization, solubilization and release from the cell membrane. Acts by enhancing the proteolytic processing (shedding) of the lipid-modified N- and C- terminal of ShhNp at the cell surface. Synergizes with DISP1 to cause an increase in SHH secretion. Probable cell surface coreceptor for VEGFR2 involved in VEGFR2-mediated angiogenesis. This is Signal peptide, CUB and EGF-like domain-containing protein 2 from Mus musculus (Mouse).